We begin with the raw amino-acid sequence, 313 residues long: Acetyl-coenzyme A carboxylase carboxyl transferase subunit beta, chloroplastic (313 aa).

Positions Leu-47 to Ser-313 constitute a CoA carboxyltransferase N-terminal domain. Zn(2+)-binding residues include Cys-51, Cys-54, Cys-70, and Cys-73. A C4-type zinc finger spans residues Cys-51–Cys-73.

It belongs to the AccD/PCCB family. Acetyl-CoA carboxylase is a heterohexamer composed of biotin carboxyl carrier protein, biotin carboxylase and 2 subunits each of ACCase subunit alpha and ACCase plastid-coded subunit beta (accD). The cofactor is Zn(2+).

It localises to the plastid. It is found in the chloroplast stroma. It catalyses the reaction N(6)-carboxybiotinyl-L-lysyl-[protein] + acetyl-CoA = N(6)-biotinyl-L-lysyl-[protein] + malonyl-CoA. Its pathway is lipid metabolism; malonyl-CoA biosynthesis; malonyl-CoA from acetyl-CoA: step 1/1. Functionally, component of the acetyl coenzyme A carboxylase (ACC) complex. Biotin carboxylase (BC) catalyzes the carboxylation of biotin on its carrier protein (BCCP) and then the CO(2) group is transferred by the transcarboxylase to acetyl-CoA to form malonyl-CoA. The protein is Acetyl-coenzyme A carboxylase carboxyl transferase subunit beta, chloroplastic of Anthoceros angustus (Hornwort).